A 271-amino-acid polypeptide reads, in one-letter code: Ribosomal RNA small subunit methyltransferase A (271 aa).

S-adenosyl-L-methionine contacts are provided by Asn-18, Leu-20, Gly-45, Glu-66, Asp-91, and Asn-112.

It belongs to the class I-like SAM-binding methyltransferase superfamily. rRNA adenine N(6)-methyltransferase family. RsmA subfamily.

The protein resides in the cytoplasm. The enzyme catalyses adenosine(1518)/adenosine(1519) in 16S rRNA + 4 S-adenosyl-L-methionine = N(6)-dimethyladenosine(1518)/N(6)-dimethyladenosine(1519) in 16S rRNA + 4 S-adenosyl-L-homocysteine + 4 H(+). Its function is as follows. Specifically dimethylates two adjacent adenosines (A1518 and A1519) in the loop of a conserved hairpin near the 3'-end of 16S rRNA in the 30S particle. May play a critical role in biogenesis of 30S subunits. The protein is Ribosomal RNA small subunit methyltransferase A of Vibrio atlanticus (strain LGP32) (Vibrio splendidus (strain Mel32)).